Consider the following 886-residue polypeptide: Protein naked cuticle homolog (886 aa).

Over residues 62–79 (KSSASTGSGTGQTKTSFQ) the composition is skewed to low complexity. Positions 62-149 (KSSASTGSGT…AGGASGAGAT (88 aa)) are disordered. The segment covering 80-92 (HSHHHHHHGHHHQ) has biased composition (basic residues). A compositionally biased stretch (low complexity) spans 93 to 112 (SPSSNGHNHSGTSHQQQQQQ). Gly residues predominate over residues 132-145 (KAGGGNATAGGASG). The 36-residue stretch at 181–216 (KKPQPLQFSFTLYDLDGHGKITKDDIAGIVSTIYES) folds into the EF-hand domain. Disordered regions lie at residues 267–286 (RKLI…PRLL) and 307–338 (AALQ…LKES). Basic residues predominate over residues 319–328 (QHHHHHHHHS). The required for nuclear localization and inhibition of Wnt signaling stretch occupies residues 554-583 (ECWKSSLCRRELIEIIRESMVKNSLCFQPN). The tract at residues 789–861 (DGEDVEQHQH…SVSSASAAST (73 aa)) is disordered. Low complexity-rich tracts occupy residues 823 to 832 (QSRSQPQSPQ) and 846 to 861 (GSGR…AAST).

It belongs to the NKD family.

It is found in the cell membrane. Its subcellular location is the cytoplasm. The protein localises to the nucleus. Cell autonomous antagonist of the canonical Wnt signaling pathway. May activate a second Wnt signaling pathway that controls planar cell polarity. Required for neuroblast specification. In Anopheles gambiae (African malaria mosquito), this protein is Protein naked cuticle homolog (nkd).